A 637-amino-acid polypeptide reads, in one-letter code: Chaperone protein HtpG (637 aa).

The segment at 1–335 is a; substrate-binding; sequence MQGTVNSERL…SSDLPLNISR (335 aa). The interval 336–559 is b; it reads ETLQNNKIIE…DGSMDIRMER (224 aa). Positions 560-637 are c; that stretch reads FLREQKQLNY…RMNSVLSQIN (78 aa).

Belongs to the heat shock protein 90 family. As to quaternary structure, homodimer.

The protein resides in the cytoplasm. In terms of biological role, molecular chaperone. Has ATPase activity. The chain is Chaperone protein HtpG from Ehrlichia ruminantium (strain Gardel).